A 209-amino-acid polypeptide reads, in one-letter code: Orotate phosphoribosyltransferase (209 aa).

5-phospho-alpha-D-ribose 1-diphosphate is bound by residues R96, K100, H102, and 122–130 (EDLISTGGS). S126 lines the orotate pocket.

Belongs to the purine/pyrimidine phosphoribosyltransferase family. PyrE subfamily. Homodimer. It depends on Mg(2+) as a cofactor.

The enzyme catalyses orotidine 5'-phosphate + diphosphate = orotate + 5-phospho-alpha-D-ribose 1-diphosphate. It functions in the pathway pyrimidine metabolism; UMP biosynthesis via de novo pathway; UMP from orotate: step 1/2. Functionally, catalyzes the transfer of a ribosyl phosphate group from 5-phosphoribose 1-diphosphate to orotate, leading to the formation of orotidine monophosphate (OMP). This chain is Orotate phosphoribosyltransferase, found in Streptococcus thermophilus (strain CNRZ 1066).